The primary structure comprises 686 residues: Gamma-aminobutyric acid receptor alpha-like (686 aa).

A signal peptide spans 1-58 (MCTMPATRDASGSGDASTDLIAARSLSSHQGQRSNLRIFKLLISCCLLMLCIYPNAWP). Over 97-393 (SSWLTQSNNH…NFHLQRHMGN (297 aa)) the chain is Extracellular. Residue Asn-108 is glycosylated (N-linked (GlcNAc...) asparagine). A disulfide bond links Cys-233 and Cys-247. An N-linked (GlcNAc...) asparagine glycan is attached at Asn-292. 3 consecutive transmembrane segments (helical) span residues 394–414 (FLIQ…VSFW), 424–441 (VSLG…GLEA), and 456–476 (FFVF…AVVH). Residues 477–650 (YYTKYGSGEC…YNSVSKIDRA (174 aa)) lie on the Cytoplasmic side of the membrane. The tract at residues 570–641 (KPPRADSDED…RRKGKRTPQY (72 aa)) is disordered. Polar residues predominate over residues 586-596 (QLRANEAPTTS). Low complexity predominate over residues 597–609 (AAAAAAQAAAQAA). A helical transmembrane segment spans residues 651-671 (SRIVFPLLFILINVFYWYGYL).

Belongs to the ligand-gated ion channel (TC 1.A.9) family. Gamma-aminobutyric acid receptor (TC 1.A.9.5) subfamily. Generally pentameric. There are five types of GABA(A) receptor chains: alpha, beta, gamma, delta, and rho. Interacts with Lcch3 (beta chain).

It localises to the postsynaptic cell membrane. The protein localises to the cell membrane. GABA, an inhibitory neurotransmitter, mediates neuronal inhibition by binding to the GABA receptor and opening an integral chloride channel. May combine with the ligand-gated ion channel subunit Lcch3 to form cation-selective GABA-gated ion channels. The sequence is that of Gamma-aminobutyric acid receptor alpha-like (Grd) from Drosophila melanogaster (Fruit fly).